A 297-amino-acid chain; its full sequence is tRNA pseudouridine synthase B (297 aa).

Residue aspartate 39 is the Nucleophile of the active site.

Belongs to the pseudouridine synthase TruB family. Type 1 subfamily.

The catalysed reaction is uridine(55) in tRNA = pseudouridine(55) in tRNA. Responsible for synthesis of pseudouridine from uracil-55 in the psi GC loop of transfer RNAs. This is tRNA pseudouridine synthase B from Lactobacillus johnsonii (strain CNCM I-12250 / La1 / NCC 533).